The following is a 181-amino-acid chain: MKVALASRNPSKVKAVEEALRILNINGTVEAVDPPPGIPPEPMGLEATVNGAVVRARHALSSIKDSTYGIGIEAGVLMLSAFNVNFDVTVAAVIDRKGLITLGLSPAFMIPPAFMRELMTGKELNDVVEKYYGVPNAGKGIGFIGLLSRGLIKRINLNTEAVYMALLPRMPWNKDLYELSD.

Mg(2+) is bound at residue Asp-65.

It belongs to the YjjX NTPase family. Homodimer. Mg(2+) is required as a cofactor. Requires Mn(2+) as cofactor.

It catalyses the reaction XTP + H2O = XDP + phosphate + H(+). The enzyme catalyses ITP + H2O = IDP + phosphate + H(+). Its function is as follows. Phosphatase that hydrolyzes non-canonical purine nucleotides such as XTP and ITP to their respective diphosphate derivatives. Probably excludes non-canonical purines from DNA/RNA precursor pool, thus preventing their incorporation into DNA/RNA and avoiding chromosomal lesions. The chain is Probable inosine/xanthosine triphosphatase from Caldivirga maquilingensis (strain ATCC 700844 / DSM 13496 / JCM 10307 / IC-167).